We begin with the raw amino-acid sequence, 312 residues long: Putative B3 domain-containing protein Os10g0537100 (312 aa).

The TF-B3 DNA-binding region spans Phe-35–Arg-153. Disordered stretches follow at residues Phe-161–Leu-182 and Leu-286–Leu-312. Basic residues predominate over residues His-170–Pro-180. The segment covering Leu-286–Ala-301 has biased composition (low complexity).

Its subcellular location is the nucleus. This chain is Putative B3 domain-containing protein Os10g0537100, found in Oryza sativa subsp. japonica (Rice).